The primary structure comprises 585 residues: MSMLTITIDGKTTSVPEGSTILDAAKTLDIDIPTLCYLNLEALSINNKAASCRVCVVEVEGRRNLAPSCATPVTDNMVVKTNSLRVLNARRTVLELLLSDHPKDCLVCAKSGECELQTLAERFGIRESPYDGGEMSHYRKDISASIIRDMDKCIMCRRCETMCNTVQTCGVLSGVNRGFTAVVAPAFEMNLADTVCTNCGQCVAVCPTGALVEHEYIWEVVEALANPDKVVIVQTAPAVRAALGEDLGVAPGTSVTGKMAAALRRLGFDHVFDTDFAADLTIMEEGSEFLDRLGKHLAGDTNVKLPILTSCCPGWVKFFEHQFPDMLDVPSTAKSPQQMFGAIAKTYYADLLGIPREKLVVVSVMPCLAKKYECARPEFSVNGNPDVDIVITTRELAKLVKRMNIDFAGLPDEDFDAPLGASTGAAPIFGVTGGVIEAALRTAYELATGETLKKVDFEDVRGMDGVKKAKVKVGDNELVIGVAHGLGNARELLKPCGAGETFHAIEVMACPGGCIGGGGQPYHHGDVELLKKRTQVLYAEDAGKPLRKSHENPYIIELYEKFLGKPLSERSHQLLHTHYFKRQRL.

One can recognise a 2Fe-2S ferredoxin-type domain in the interval 2–85 (SMLTITIDGK…NMVVKTNSLR (84 aa)). Residues cysteine 36, cysteine 52, cysteine 55, and cysteine 69 each contribute to the [2Fe-2S] cluster site. A 4Fe-4S His(Cys)3-ligated-type domain is found at 85–124 (RVLNARRTVLELLLSDHPKDCLVCAKSGECELQTLAERFG). Residues histidine 101, cysteine 105, cysteine 108, and cysteine 114 each coordinate [4Fe-4S] cluster. 4Fe-4S ferredoxin-type domains are found at residues 144-174 (ASII…VLSG) and 185-216 (PAFE…EHEY).

As to quaternary structure, heterotetramer composed of HndA, HndB, HndC and HndD subunits. HndD is probably the hydrogenase subunit. [4Fe-4S] cluster is required as a cofactor.

It carries out the reaction H2 + NADP(+) = NADPH + H(+). With respect to regulation, inhibited by oxygen. In terms of biological role, catalyzes the reduction of NADP in the presence of molecular H(2) to yield NADPH. In Solidesulfovibrio fructosivorans (Desulfovibrio fructosivorans), this protein is NADP-reducing hydrogenase subunit HndD (hndD).